We begin with the raw amino-acid sequence, 473 residues long: Ion-translocating oxidoreductase complex subunit C (473 aa).

4Fe-4S ferredoxin-type domains follow at residues 328–357 and 368–396; these read KNESISEKTCIRCGYCSYVCPVNLLPQQLY and TKKHYVLDCIECKACEKVCPSYIPLVKYF. Residues Cys337, Cys340, Cys343, Cys347, Cys376, Cys379, Cys382, and Cys386 each coordinate [4Fe-4S] cluster.

It belongs to the 4Fe4S bacterial-type ferredoxin family. RnfC subfamily. As to quaternary structure, the complex is composed of six subunits: RnfA, RnfB, RnfC, RnfD, RnfE and RnfG. [4Fe-4S] cluster serves as cofactor.

It is found in the cell inner membrane. Its function is as follows. Part of a membrane-bound complex that couples electron transfer with translocation of ions across the membrane. This is Ion-translocating oxidoreductase complex subunit C from Buchnera aphidicola subsp. Acyrthosiphon pisum (strain APS) (Acyrthosiphon pisum symbiotic bacterium).